The chain runs to 192 residues: Probable thymidylate kinase (192 aa).

Gly7–Ser14 contributes to the ATP binding site.

This sequence belongs to the thymidylate kinase family.

It catalyses the reaction dTMP + ATP = dTDP + ADP. The protein is Probable thymidylate kinase of Methanobrevibacter smithii (strain ATCC 35061 / DSM 861 / OCM 144 / PS).